Here is a 312-residue protein sequence, read N- to C-terminus: Pyrimidine-specific ribonucleoside hydrolase RihA (312 aa).

The active site involves His-240.

It belongs to the IUNH family. RihA subfamily.

In terms of biological role, hydrolyzes cytidine or uridine to ribose and cytosine or uracil, respectively. This Citrobacter koseri (strain ATCC BAA-895 / CDC 4225-83 / SGSC4696) protein is Pyrimidine-specific ribonucleoside hydrolase RihA.